Here is a 605-residue protein sequence, read N- to C-terminus: MFDIQEHLKKLPSEPGVYLMKDKYDHIIYVGKAISLKNRVRQYFQSSKNHTSKVKSMVKNIYKFEYIITDSELEALILECNLIKRYRPKYNVVLRDDKTYPYIKVTTNEDYPRILKVRRVLKDKAKYFGPYTNITAVNDTLELISSTYPIRSCKIDIDKAIKNKTRPCLNLHINKCLGPCTGNVSKEEYGKMIEEIIMCLSGKEEKLMELLKEKMNESSMNFRFEEAAVYRDKIKSLEEMIQKQKIDATVSDLNQDVVAMARAHNEACVQVFFIRNGKIVGREHFILEGVMDSPRASILSSFVKQFYNEQEYIPKELIIEDEIEDSSILEEWLSSKKGQKVTIRVPQKGEKKSLVEMVRKNAVEYLEKFSDMNKRKYEKSIGALEELKQILNLEKLPIRIEAYDISNIQGVDSIGSMVVYTNAKKDKKEYRRYKIKTVIGPNDYDSMAEIVDRRLKHGNLPDLILLDGGKGQVSAVKKVLELNDVDIPLWGMYKDDKHRTKGLICKEKEIELDKTTNLYRFIASIQEEVHNYAITYHRSLRNKALTKSILDDIQGIGEKRKKSLLNHFKDVDAIKKATMEELLEVDGMNKSIADNVYNFFRKEEN.

Residues 13-92 form the GIY-YIG domain; that stretch reads SEPGVYLMKD…IKRYRPKYNV (80 aa). One can recognise a UVR domain in the interval 205–240; it reads EKLMELLKEKMNESSMNFRFEEAAVYRDKIKSLEEM.

Belongs to the UvrC family. As to quaternary structure, interacts with UvrB in an incision complex.

Its subcellular location is the cytoplasm. The UvrABC repair system catalyzes the recognition and processing of DNA lesions. UvrC both incises the 5' and 3' sides of the lesion. The N-terminal half is responsible for the 3' incision and the C-terminal half is responsible for the 5' incision. This is UvrABC system protein C from Clostridioides difficile (strain 630) (Peptoclostridium difficile).